Here is a 336-residue protein sequence, read N- to C-terminus: Probable allantoicase (336 aa).

This sequence belongs to the allantoicase family.

The catalysed reaction is allantoate + H2O = (S)-ureidoglycolate + urea. It functions in the pathway nitrogen metabolism; (S)-allantoin degradation; (S)-ureidoglycolate from allantoate (aminidohydrolase route): step 1/1. This chain is Probable allantoicase, found in Acinetobacter baumannii (strain AYE).